The sequence spans 36 residues: Dermonecrotic toxin LgSicTox-beta-LOXN2 (36 aa).

The protein belongs to the arthropod phospholipase D family. Class II subfamily. The cofactor is Mg(2+). Post-translationally, contains 2 disulfide bonds. In terms of tissue distribution, expressed by the venom gland.

The protein localises to the secreted. It carries out the reaction an N-(acyl)-sphingosylphosphocholine = an N-(acyl)-sphingosyl-1,3-cyclic phosphate + choline. The catalysed reaction is an N-(acyl)-sphingosylphosphoethanolamine = an N-(acyl)-sphingosyl-1,3-cyclic phosphate + ethanolamine. It catalyses the reaction a 1-acyl-sn-glycero-3-phosphocholine = a 1-acyl-sn-glycero-2,3-cyclic phosphate + choline. The enzyme catalyses a 1-acyl-sn-glycero-3-phosphoethanolamine = a 1-acyl-sn-glycero-2,3-cyclic phosphate + ethanolamine. In terms of biological role, dermonecrotic toxins cleave the phosphodiester linkage between the phosphate and headgroup of certain phospholipids (sphingolipid and lysolipid substrates), forming an alcohol (often choline) and a cyclic phosphate. This toxin acts on sphingomyelin (SM). It may also act on ceramide phosphoethanolamine (CPE), lysophosphatidylcholine (LPC) and lysophosphatidylethanolamine (LPE), but not on lysophosphatidylserine (LPS), and lysophosphatidylglycerol (LPG). It acts by transphosphatidylation, releasing exclusively cyclic phosphate products as second products. Induces dermonecrosis, hemolysis, increased vascular permeability, edema, inflammatory response, and platelet aggregation. The protein is Dermonecrotic toxin LgSicTox-beta-LOXN2 of Loxosceles gaucho (Spider).